Here is a 479-residue protein sequence, read N- to C-terminus: MRVLHVCSELFPLLKTGGLADVAGALPGAQIAAGMDVRVILPAFPDLKKGIANLQVVRELDTFAGHVTLLFGHFNGVGIYLIDVPELYERAGSPYHDPALYAYADNYLRFALLGWMGCEMACGLDHYWRPDIVHAHDWHAGLTCAYLAARNRPAKSIFTVHNLAYQGLFDARHMPDLHLPREFFQVYGLEFYGQISYLKAGLYYADHITTVSPTYAHEITLPAYGYGMEGLLKSREEEGRLSGILNGVDEMIWNPAHDPLLASHYSRDTLANKAENKRRLQTAMGLKVDDKVPVFAIVSRLTSQKGLDIALSAIPDLLEQGGQVVVLGAGDADLQEGFLAAAAEYHGQVGVQIGYHEAFSHRIIGGADVIMVPSRFEPCGLTQLYGLKYGTLPLVRRTGGLADTVSDCSLENLADGLASGFVFNDCSVGSLSRAIRRVFVLWSRPTLWRYVQRQAMAMDFGWQVAAQAYGALYQRLYTH.

ADP-alpha-D-glucose is bound at residue Lys15.

This sequence belongs to the glycosyltransferase 1 family. Bacterial/plant glycogen synthase subfamily.

It carries out the reaction [(1-&gt;4)-alpha-D-glucosyl](n) + ADP-alpha-D-glucose = [(1-&gt;4)-alpha-D-glucosyl](n+1) + ADP + H(+). It participates in glycan biosynthesis; glycogen biosynthesis. Its function is as follows. Synthesizes alpha-1,4-glucan chains using ADP-glucose. The protein is Glycogen synthase of Pectobacterium carotovorum subsp. carotovorum (strain PC1).